Reading from the N-terminus, the 121-residue chain is Small ribosomal subunit protein uS13 (121 aa).

A disordered region spans residues 92–121 (RKGLPMRGQRTRTNARTRKGPRRAAQALKK).

Belongs to the universal ribosomal protein uS13 family. As to quaternary structure, part of the 30S ribosomal subunit. Forms a loose heterodimer with protein S19. Forms two bridges to the 50S subunit in the 70S ribosome.

Its function is as follows. Located at the top of the head of the 30S subunit, it contacts several helices of the 16S rRNA. In the 70S ribosome it contacts the 23S rRNA (bridge B1a) and protein L5 of the 50S subunit (bridge B1b), connecting the 2 subunits; these bridges are implicated in subunit movement. Contacts the tRNAs in the A and P-sites. The sequence is that of Small ribosomal subunit protein uS13 from Burkholderia cenocepacia (strain HI2424).